We begin with the raw amino-acid sequence, 323 residues long: Ficolin-2 (323 aa).

Positions 1-26 are cleaved as a signal peptide; it reads MDTRGVAAAMRPLVLLVAFLCTAAPA. Positions 52-102 constitute a Collagen-like domain; that stretch reads GLPGAAGPKGEAGASGPKGGQGPPGAPGEPGPPGPKGDRGEKGEPGPKGES. Residues 55-66 are compositionally biased toward low complexity; that stretch reads GAAGPKGEAGAS. The segment at 55-107 is disordered; it reads GAAGPKGEAGASGPKGGQGPPGAPGEPGPPGPKGDRGEKGEPGPKGESWETEQ. Positions 75–86 are enriched in pro residues; sequence PGAPGEPGPPGP. The span at 87-102 shows a compositional bias: basic and acidic residues; sequence KGDRGEKGEPGPKGES. In terms of domain architecture, Fibrinogen C-terminal spans 106-323; the sequence is EQCLTGPRTC…KVSEMKFRAT (218 aa). Disulfide bonds link C108–C136 and C115–C143. An N-linked (GlcNAc...) asparagine glycan is attached at N249. Ca(2+) is bound by residues D259, D261, and S265. C267 and C280 are disulfide-bonded. 2 N-linked (GlcNAc...) asparagine glycosylation sites follow: N302 and N310.

This sequence belongs to the ficolin lectin family. Homotrimer. Interacts with elastin. Interacts with MASP1 and MASP2. Mainly expressed in skeletal muscle.

It is found in the secreted. May function in innate immunity through activation of the lectin complement pathway. Calcium-dependent and GlcNAc-binding lectin. This is Ficolin-2 (FCN2) from Sus scrofa (Pig).